Consider the following 82-residue polypeptide: Bowman-Birk type proteinase inhibitor (82 aa).

The disordered stretch occupies residues 1-24; sequence SGHHDETTDEPSESSKPCCDQCSC. 7 disulfide bridges follow: Cys18–Cys72, Cys19–Cys34, Cys22–Cys68, Cys24–Cys32, Cys42–Cys49, Cys46–Cys61, and Cys51–Cys59.

It belongs to the Bowman-Birk serine protease inhibitor family.

In terms of biological role, trypsin and chymotrypsin are inhibited simultaneously. There are two separate reactive sites for trypsin and chymotrypsin but they do not inhibit simultaneously. The chain is Bowman-Birk type proteinase inhibitor from Phaseolus angularis (Azuki bean).